The following is a 251-amino-acid chain: N-acetylmuramoyl-L-alanine amidase CwlA (251 aa).

Residues 1–37 (MEIKQMLVPVSRYSVLCPYEMNPTEITFHNTYNDAPA) form the signal peptide. Residues 38 to 140 (INERNNVANN…QERNGKYCPH (103 aa)) form the N-acetylmuramoyl-L-alanine amidase domain.

It belongs to the N-acetylmuramoyl-L-alanine amidase 2 family.

It localises to the secreted. The enzyme catalyses Hydrolyzes the link between N-acetylmuramoyl residues and L-amino acid residues in certain cell-wall glycopeptides.. Functionally, autolysins are involved in some important biological processes such as cell separation, cell-wall turnover, competence for genetic transformation, formation of the flagella and sporulation. The polypeptide is N-acetylmuramoyl-L-alanine amidase CwlA (cwlA) (Bacillus sp).